Consider the following 136-residue polypeptide: Protein NrdI (136 aa).

Belongs to the NrdI family.

Functionally, probably involved in ribonucleotide reductase function. The polypeptide is Protein NrdI (Shigella dysenteriae serotype 1 (strain Sd197)).